The chain runs to 273 residues: Large ribosomal subunit protein uL2 (273 aa).

The disordered stretch occupies residues 222–273 (GVAMNPVDHPMGGGEGRSSGGRHPCTPWGVPTKGYRTRKSKRSDKLIVHRRK). The span at 264 to 273 (SDKLIVHRRK) shows a compositional bias: basic and acidic residues.

This sequence belongs to the universal ribosomal protein uL2 family. In terms of assembly, part of the 50S ribosomal subunit. Forms a bridge to the 30S subunit in the 70S ribosome.

In terms of biological role, one of the primary rRNA binding proteins. Required for association of the 30S and 50S subunits to form the 70S ribosome, for tRNA binding and peptide bond formation. It has been suggested to have peptidyltransferase activity; this is somewhat controversial. Makes several contacts with the 16S rRNA in the 70S ribosome. The polypeptide is Large ribosomal subunit protein uL2 (Syntrophobacter fumaroxidans (strain DSM 10017 / MPOB)).